The chain runs to 245 residues: tRNA pseudouridine synthase A (245 aa).

The Nucleophile role is filled by aspartate 52. Position 111 (tyrosine 111) interacts with substrate.

Belongs to the tRNA pseudouridine synthase TruA family. As to quaternary structure, homodimer.

It carries out the reaction uridine(38/39/40) in tRNA = pseudouridine(38/39/40) in tRNA. Formation of pseudouridine at positions 38, 39 and 40 in the anticodon stem and loop of transfer RNAs. The polypeptide is tRNA pseudouridine synthase A (Thermotoga sp. (strain RQ2)).